We begin with the raw amino-acid sequence, 230 residues long: Large ribosomal subunit protein uL1 (230 aa).

Belongs to the universal ribosomal protein uL1 family. As to quaternary structure, part of the 50S ribosomal subunit.

In terms of biological role, binds directly to 23S rRNA. The L1 stalk is quite mobile in the ribosome, and is involved in E site tRNA release. Functionally, protein L1 is also a translational repressor protein, it controls the translation of the L11 operon by binding to its mRNA. The chain is Large ribosomal subunit protein uL1 from Desulfitobacterium hafniense (strain DSM 10664 / DCB-2).